Reading from the N-terminus, the 132-residue chain is MSMTDPIADMLVRINNAASVGKPNVRFPFSRVKLAIALVLKHEGYIFDAKVIQGDNSKSDIEIVLKYFEGRPVIRILKRVSRSGLRKYCGKAELPKVLGGLGISIISTSKGIMIDSKARESGVGGEVLCFVA.

It belongs to the universal ribosomal protein uS8 family. Part of the 30S ribosomal subunit. Contacts proteins S5 and S12.

One of the primary rRNA binding proteins, it binds directly to 16S rRNA central domain where it helps coordinate assembly of the platform of the 30S subunit. This Xylella fastidiosa (strain 9a5c) protein is Small ribosomal subunit protein uS8.